A 155-amino-acid polypeptide reads, in one-letter code: Cathelicidin-1 (155 aa).

A signal peptide spans 1-29 (METQRASLSLGRCSLWLLLLGLALPSASA). Residue glutamine 30 is modified to Pyrrolidone carboxylic acid. Residues 30-143 (QVLSYREAVL…KQPWAPPQAA (114 aa)) constitute a propeptide that is removed on maturation. Disulfide bonds link cysteine 85–cysteine 96, cysteine 107–cysteine 124, and cysteine 146–cysteine 154.

It belongs to the cathelicidin family.

The protein resides in the secreted. Functionally, potent microbicidal activity; active against S.aureus and E.coli. The sequence is that of Cathelicidin-1 (CATHL1A) from Ovis aries (Sheep).